The primary structure comprises 943 residues: Translation initiation factor IF-2 (943 aa).

Residues 29 to 349 are disordered; that stretch reads LSVKSHSSSV…NNRGNSAPKL (321 aa). Basic and acidic residues-rich tracts occupy residues 69–82, 112–137, 145–155, 163–196, and 224–253; these read PKEE…DKAS, FKAE…DNRN, QGKRHNNDRRN, DHNK…RDNA, and RQSE…EKQQ. The span at 254 to 266 shows a compositional bias: low complexity; sequence AEVAVQKAAAETK. Positions 296–309 are enriched in basic and acidic residues; sequence KSRDNHRVNEDGPK. The segment covering 313 to 332 has biased composition (low complexity); that stretch reads NNKWNNQNQVRNQRNSNWNK. In terms of domain architecture, tr-type G spans 445 to 614; that stretch reads ERAPVVTIMG…LLVAEVEELK (170 aa). Positions 454-461 are G1; that stretch reads GHVDHGKT. GTP is bound at residue 454–461; that stretch reads GHVDHGKT. The G2 stretch occupies residues 479–483; sequence GITQH. A G3 region spans residues 500 to 503; sequence DTPG. GTP-binding positions include 500 to 504 and 554 to 557; these read DTPGH and NKID. The segment at 554–557 is G4; that stretch reads NKID. Residues 590 to 592 form a G5 region; it reads SAK.

Belongs to the TRAFAC class translation factor GTPase superfamily. Classic translation factor GTPase family. IF-2 subfamily.

It is found in the cytoplasm. One of the essential components for the initiation of protein synthesis. Protects formylmethionyl-tRNA from spontaneous hydrolysis and promotes its binding to the 30S ribosomal subunits. Also involved in the hydrolysis of GTP during the formation of the 70S ribosomal complex. The sequence is that of Translation initiation factor IF-2 from Streptococcus thermophilus (strain ATCC BAA-491 / LMD-9).